Consider the following 530-residue polypeptide: Neutral amino acid transporter A (530 aa).

The residue at position 1 (Met1) is an N-acetylmethionine. Polar residues predominate over residues 1 to 10 (MEKSSETNGY). The disordered stretch occupies residues 1–28 (MEKSSETNGYLDSAQEGPAAGPGEPGTT). Residues 1–41 (MEKSSETNGYLDSAQEGPAAGPGEPGTTARRAGRCAGFLRR) are Cytoplasmic-facing. A compositionally biased stretch (low complexity) spans 16-28 (EGPAAGPGEPGTT). 3 helical membrane passes run 42-62 (HGLV…GAAL), 88-108 (MIIL…LDAS), and 119-139 (AYFG…AFII). The Extracellular portion of the chain corresponds to 140–216 (KPGSGSQTLQ…VTIEKIPIGT (77 aa)). The N-linked (GlcNAc...) asparagine glycan is linked to Asn201. A run of 6 helical transmembrane segments spans residues 217 to 237 (EIEG…GVAL), 257 to 277 (ATMV…MFLV), 298 to 318 (IFTS…LIYF), 328 to 348 (FLLG…SSAT), 373 to 393 (IGAT…AVFI), and 418 to 438 (VGAA…LEAI). The disordered stretch occupies residues 488-530 (ELSEVKVEAIPNSKSEEETSPLVTHPNPTGPAASTPESKESVL). Phosphoserine occurs at positions 507, 525, and 528.

The protein belongs to the dicarboxylate/amino acid:cation symporter (DAACS) (TC 2.A.23) family. SLC1A4 subfamily.

It localises to the membrane. Its subcellular location is the melanosome. The enzyme catalyses L-threonine(in) + Na(+)(in) = L-threonine(out) + Na(+)(out). It catalyses the reaction L-serine(in) + Na(+)(in) = L-serine(out) + Na(+)(out). It carries out the reaction L-cysteine(in) + Na(+)(in) = L-cysteine(out) + Na(+)(out). The catalysed reaction is L-alanine(in) + Na(+)(in) = L-alanine(out) + Na(+)(out). The enzyme catalyses L-proline(in) + Na(+)(in) = L-proline(out) + Na(+)(out). It catalyses the reaction 4-hydroxy-L-proline(in) + Na(+)(in) = 4-hydroxy-L-proline(out) + Na(+)(out). Its function is as follows. Sodium-dependent neutral amino-acid transporter that mediates transport of alanine, serine, cysteine, proline, hydroxyproline and threonine. The sequence is that of Neutral amino acid transporter A (SLC1A4) from Bos taurus (Bovine).